The sequence spans 263 residues: Protein phosphatase type 2A regulatory subunit RTS3 (263 aa).

Disordered stretches follow at residues methionine 1–arginine 62 and leucine 149–glycine 176. Positions leucine 46–arginine 61 are enriched in low complexity. Residues serine 172, serine 192, serine 214, and serine 238 each carry the phosphoserine modification.

The protein localises to the cytoplasm. Its subcellular location is the nucleus. Its function is as follows. May be a component of a protein phosphatase type 2A (PP2A) complex. Negatively regulates SIT4 phosphatase, a modulators of caffeine sensitivity. The polypeptide is Protein phosphatase type 2A regulatory subunit RTS3 (RTS3) (Saccharomyces cerevisiae (strain ATCC 204508 / S288c) (Baker's yeast)).